The primary structure comprises 319 residues: ATP-dependent 6-phosphofructokinase (319 aa).

Gly11 provides a ligand contact to ATP. Residue 21-25 (RAVVR) coordinates ADP. ATP contacts are provided by residues 72 to 73 (RC) and 102 to 105 (GEGS). Glu103 is a binding site for Mg(2+). Residue 126–128 (TID) coordinates substrate. Asp128 acts as the Proton acceptor in catalysis. Position 155 (Lys155) interacts with ADP. Residues Arg163 and 170-172 (MGR) contribute to the substrate site. Residues 186 to 188 (GAE), Arg212, and 214 to 216 (KIN) contribute to the ADP site. Residues Glu223, Arg244, and 250 to 253 (HVQR) contribute to the substrate site.

The protein belongs to the phosphofructokinase type A (PFKA) family. ATP-dependent PFK group I subfamily. Prokaryotic clade 'B1' sub-subfamily. In terms of assembly, homotetramer. Requires Mg(2+) as cofactor.

The protein resides in the cytoplasm. The catalysed reaction is beta-D-fructose 6-phosphate + ATP = beta-D-fructose 1,6-bisphosphate + ADP + H(+). It functions in the pathway carbohydrate degradation; glycolysis; D-glyceraldehyde 3-phosphate and glycerone phosphate from D-glucose: step 3/4. Its activity is regulated as follows. Allosterically activated by ADP and other diphosphonucleosides, and allosterically inhibited by phosphoenolpyruvate. Catalyzes the phosphorylation of D-fructose 6-phosphate to fructose 1,6-bisphosphate by ATP, the first committing step of glycolysis. This is ATP-dependent 6-phosphofructokinase from Thermotoga petrophila (strain ATCC BAA-488 / DSM 13995 / JCM 10881 / RKU-1).